Here is a 518-residue protein sequence, read N- to C-terminus: Mitochondrial 2-methylisocitrate lyase (518 aa).

It belongs to the isocitrate lyase/PEP mutase superfamily. Isocitrate lyase family.

It localises to the mitochondrion matrix. The protein resides in the cytoplasm. The enzyme catalyses (2S,3R)-3-hydroxybutane-1,2,3-tricarboxylate = pyruvate + succinate. It functions in the pathway organic acid metabolism; propanoate degradation. Its function is as follows. Catalyzes the formation of pyruvate and succinate from 2-methylisocitrate during the metabolism of endogenous propionyl-CoA. Does not act on isocitrate. This is Mitochondrial 2-methylisocitrate lyase (icl2) from Schizosaccharomyces pombe (strain 972 / ATCC 24843) (Fission yeast).